We begin with the raw amino-acid sequence, 353 residues long: Guanine nucleotide-binding protein subunit alpha (353 aa).

The disordered stretch occupies residues 1 to 21 (MGCGMSTEEKEGKARNEEIEN). G2 is lipidated: N-myristoyl glycine. C3 is lipidated: S-palmitoyl cysteine. Residues 7-21 (TEEKEGKARNEEIEN) show a composition bias toward basic and acidic residues. Positions 32 to 353 (NEIKMLLLGA…QENLRLCGLI (322 aa)) constitute a G-alpha domain. The tract at residues 35-48 (KMLLLGAGESGKST) is G1 motif. Positions 43, 44, 45, 46, 47, 48, 150, 175, 181, 203, 269, 270, 272, and 325 each coordinate GTP. S47 is a binding site for Mg(2+). The segment at 173 to 181 (DVLRSRVKT) is G2 motif. Residue T181 participates in Mg(2+) binding. The G3 motif stretch occupies residues 196 to 205 (YRMFDVGGQR). Residues 265 to 272 (ILFLNKID) form a G4 motif region. A G5 motif region spans residues 323–328 (TCATDT).

Belongs to the G-alpha family. G(q) subfamily. In terms of assembly, g proteins are composed of 3 units; alpha, beta and gamma. The alpha chain contains the guanine nucleotide binding site. Requires Mg(2+) as cofactor.

Its function is as follows. Guanine nucleotide-binding proteins (G proteins) are involved as modulators or transducers in various transmembrane signaling systems. Plays a role in pathogenicity, specifically in appressorium formation in rice blast disease. Also involved in mating. The polypeptide is Guanine nucleotide-binding protein subunit alpha (MAGB) (Pyricularia oryzae (strain 70-15 / ATCC MYA-4617 / FGSC 8958) (Rice blast fungus)).